A 408-amino-acid chain; its full sequence is Bone morphogenetic protein 4 (408 aa).

The signal sequence occupies residues 1–19; sequence MIPGNRMLMVVLLCQVLLG. The propeptide occupies 20–292; it reads GASHASLIPE…HTLTRRRAKR (273 aa). Serine 91 carries the phosphoserine modification. Residues 91–111 form a disordered region; the sequence is SGEEEEEEQSQGTGLEYPERP. 2 N-linked (GlcNAc...) asparagine glycosylation sites follow: asparagine 144 and asparagine 209. A disordered region spans residues 281-307; that stretch reads RGHTLTRRRAKRSPKHHPQRSRKKNKN. The span at 284–307 shows a compositional bias: basic residues; that stretch reads TLTRRRAKRSPKHHPQRSRKKNKN. Disulfide bonds link cysteine 308–cysteine 373, cysteine 337–cysteine 405, and cysteine 341–cysteine 407. Residues asparagine 350 and asparagine 365 are each glycosylated (N-linked (GlcNAc...) asparagine).

This sequence belongs to the TGF-beta family. In terms of assembly, homodimer; disulfide-linked. Interacts with SOSTDC1, GREM2, RGMA, RGMB and RGMC. Part of a complex consisting of TWSG1 and CHRD. Interacts with the serine proteases, HTRA1 and HTRA3; the interaction with either inhibits BMP4-mediated signaling. The HTRA protease activity is required for this inhibition. Interacts with FBN1 (via N-terminal domain) and FBN2. Interacts with type I receptor BMPR1A. Interacts with type II receptor BMPR2. Interacts with FSTL1; this interaction inhibits the activation of the BMP4/Smad1/5/8 signaling pathway. Interacts with SCUBE3. Interacts with TGFBR3. As to expression, in the cochlea, detected in nonprosensory regions and outer sulcus (at protein level). Prior to gastrulation, expressed in the extraembryonic ectoderm. Later, expressed in the extraembryonic mesoderm.

The protein resides in the secreted. The protein localises to the extracellular space. It localises to the extracellular matrix. Growth factor of the TGF-beta superfamily that plays essential roles in many developmental processes, including neurogenesis, vascular development, angiogenesis and osteogenesis. Acts in concert with PTHLH/PTHRP to stimulate ductal outgrowth during embryonic mammary development and to inhibit hair follicle induction. Initiates the canonical BMP signaling cascade by associating with type I receptor BMPR1A and type II receptor BMPR2. Once all three components are bound together in a complex at the cell surface, BMPR2 phosphorylates and activates BMPR1A. In turn, BMPR1A propagates signal by phosphorylating SMAD1/5/8 that travel to the nucleus and act as activators and repressors of transcription of target genes. Positively regulates the expression of odontogenic development regulator MSX1 via inducing the IPO7-mediated import of SMAD1 to the nucleus. Required for MSX1-mediated mesenchymal molar tooth bud development beyond the bud stage, via promoting Wnt signaling. Acts as a positive regulator of odontoblast differentiation during mesenchymal tooth germ formation, expression is repressed during the bell stage by MSX1-mediated inhibition of CTNNB1 signaling. Able to induce its own expression in dental mesenchymal cells and also in the neighboring dental epithelial cells via an MSX1-mediated pathway. Can also signal through non-canonical BMP pathways such as ERK/MAP kinase, PI3K/Akt or SRC cascades. For example, induces SRC phosphorylation which, in turn, activates VEGFR2, leading to an angiogenic response. In Mus musculus (Mouse), this protein is Bone morphogenetic protein 4.